The primary structure comprises 141 residues: Hemoglobin subunit alpha (141 aa).

The region spanning 1–141 is the Globin domain; that stretch reads VLSPADKSNV…VSTVLTSKYR (141 aa). Ser3 bears the Phosphoserine mark. Lys7 and Lys11 each carry N6-succinyllysine. Lys16 bears the N6-acetyllysine; alternate mark. Lys16 carries the N6-succinyllysine; alternate modification. Position 24 is a phosphotyrosine (Tyr24). A Phosphoserine modification is found at Ser35. An N6-succinyllysine modification is found at Lys40. Ser49 is modified (phosphoserine). His58 contacts O2. His87 is a heme b binding site. Residue Ser102 is modified to Phosphoserine. Position 108 is a phosphothreonine (Thr108). 2 positions are modified to phosphoserine: Ser124 and Ser131. Phosphothreonine occurs at positions 134 and 137. Ser138 is modified (phosphoserine).

It belongs to the globin family. As to quaternary structure, heterotetramer of two alpha chains and two beta chains. In terms of tissue distribution, red blood cells.

Its function is as follows. Involved in oxygen transport from the lung to the various peripheral tissues. Hemopressin acts as an antagonist peptide of the cannabinoid receptor CNR1. Hemopressin-binding efficiently blocks cannabinoid receptor CNR1 and subsequent signaling. The protein is Hemoglobin subunit alpha (HBA) of Saguinus mystax (Moustached tamarin).